We begin with the raw amino-acid sequence, 98 residues long: Large ribosomal subunit protein eL21 (98 aa).

Belongs to the eukaryotic ribosomal protein eL21 family.

The polypeptide is Large ribosomal subunit protein eL21 (Methanocorpusculum labreanum (strain ATCC 43576 / DSM 4855 / Z)).